Here is an 81-residue protein sequence, read N- to C-terminus: Protein PYP1 (81 aa).

A chloroplast-targeting transit peptide spans 1–25 (MAFVSGFTGMPVTARVSKAVCRTRM). Positions 27-57 (LEGGKSSGGGEATRDPEPTAVDPNDPKGKQQ) are disordered.

The protein localises to the plastid. It is found in the chloroplast. The polypeptide is Protein PYP1 (Pyropia yezoensis (Susabi-nori)).